The following is a 1331-amino-acid chain: Xanthine dehydrogenase/oxidase (1331 aa).

The 2Fe-2S ferredoxin-type domain occupies 4–91 (DELVFFVNGK…HVAVTTVEGI (88 aa)). 8 residues coordinate [2Fe-2S] cluster: Cys43, Cys48, Cys51, Cys73, Cys113, Cys116, Cys148, and Cys150. Positions 229–412 (FEGERVTWIQ…LSIEIPYSRE (184 aa)) constitute an FAD-binding PCMH-type domain. FAD is bound by residues 257-264 (LVVGNTEI), Phe335, 345-349 (SIGGN), Asp358, Leu402, and Lys420. The cysteines at positions 534 and 991 are disulfide-linked. Residues Gln766 and Phe797 each coordinate Mo-molybdopterin. 2 residues coordinate substrate: Glu801 and Arg879. Arg911 contacts Mo-molybdopterin. Residues Phe913 and Thr1009 each coordinate substrate. Residue Ala1078 coordinates Mo-molybdopterin. Glu1260 serves as the catalytic Proton acceptor.

It belongs to the xanthine dehydrogenase family. Homodimer. Interacts with BTN1A1. FAD serves as cofactor. The cofactor is Mo-molybdopterin. It depends on [2Fe-2S] cluster as a cofactor. Subject to partial proteolysis; this alters the enzyme from the dehydrogenase form (D) to the oxidase form (O). Post-translationally, contains sulfhydryl groups that are easily oxidized (in vitro); this alters the enzyme from the dehydrogenase form (D) to the oxidase form (O).

The protein localises to the cytoplasm. Its subcellular location is the peroxisome. The protein resides in the secreted. The enzyme catalyses xanthine + NAD(+) + H2O = urate + NADH + H(+). The catalysed reaction is hypoxanthine + NAD(+) + H2O = xanthine + NADH + H(+). It catalyses the reaction xanthine + O2 + H2O = urate + H2O2. With respect to regulation, can be converted from the dehydrogenase form (D) to the oxidase form (O) irreversibly by proteolysis or reversibly through the oxidation of sulfhydryl groups. In terms of biological role, key enzyme in purine degradation. Catalyzes the oxidation of hypoxanthine to xanthine. Catalyzes the oxidation of xanthine to uric acid. Contributes to the generation of reactive oxygen species. This chain is Xanthine dehydrogenase/oxidase (XDH), found in Felis catus (Cat).